A 377-amino-acid chain; its full sequence is Acetyltransferase ple2 (377 aa).

Positions 1–27 (MKPFSPELLVLSFILLVLSCAIRPAKG) are cleaved as a signal peptide. The next 4 membrane-spanning stretches (helical) occupy residues 29 to 49 (WILW…TTGD), 56 to 76 (IANN…LTDV), 176 to 196 (IAAW…ALSL), and 258 to 278 (PALY…HAIG).

This sequence belongs to the wax synthase family.

Its subcellular location is the membrane. The protein operates within secondary metabolite biosynthesis; terpenoid biosynthesis. Functionally, acetyltransferase; part of the gene cluster that mediates the biosynthesis of pleuromutilin, a tricyclic diterpene showing antibacterial properties. The geranylgeranyl diphosphate (GGPP) synthase ple4 catalyzes the first step in pleuromutilin biosynthesis. GGPP is then substrate of the premutilin synthase (PS) ple3 to yield premutilin. Premutilin synthase is a bifunctional enzyme composed of the fusion of a class II diterpene cyclase (DTC) and a class I diterpene synthase (DTS), with the corresponding domains and active sites containing characteristic aspartate-rich motifs. GGPP is first converted to mutildienyl-diphosphate (MPP) at the class II DTC site. MPP is subsequently further cyclized at the class I DTS site, followed by a 1,5-hydride shift and addition of water prior to terminating deprotonation, to yield premutilin. The cytochrome P450 monooxygenases ple5 and ple6 hydroxylate premutilin at C-11 and C-3, respectively, producing 11-hydroxypremutilin and 3-hydroxypremutilin. The combination of the actions of both ple5 and ple6 leads to the production of 3,11-dihydroxypremutilin. The short chain dehydrogenase ple7 further converts 3,11-dihydroxypremutilin into mutilin. The acetyltransferase ple2 then acetylates mutilin to produce 14-O-acetylmutilin. Finally, the cytochrome P450 monooxygenase ple1 catalyzes hydroxylation on the alpha position of the acetyl side chain of 14-O-acetylmutilin to yield pleuromutilin. In Rhodocybe pseudopiperita (Clitopilus pseudopiperitus), this protein is Acetyltransferase ple2.